The sequence spans 180 residues: NAD(P)H-quinone oxidoreductase subunit I, chloroplastic (180 aa).

2 consecutive 4Fe-4S ferredoxin-type domains span residues 55-84 and 95-124; these read GRIH…VNWR and LNYS…MTEE. Residues C64, C67, C70, C74, C104, C107, C110, and C114 each contribute to the [4Fe-4S] cluster site.

It belongs to the complex I 23 kDa subunit family. NDH is composed of at least 16 different subunits, 5 of which are encoded in the nucleus. [4Fe-4S] cluster serves as cofactor.

It localises to the plastid. The protein resides in the chloroplast thylakoid membrane. The catalysed reaction is a plastoquinone + NADH + (n+1) H(+)(in) = a plastoquinol + NAD(+) + n H(+)(out). It carries out the reaction a plastoquinone + NADPH + (n+1) H(+)(in) = a plastoquinol + NADP(+) + n H(+)(out). In terms of biological role, NDH shuttles electrons from NAD(P)H:plastoquinone, via FMN and iron-sulfur (Fe-S) centers, to quinones in the photosynthetic chain and possibly in a chloroplast respiratory chain. The immediate electron acceptor for the enzyme in this species is believed to be plastoquinone. Couples the redox reaction to proton translocation, and thus conserves the redox energy in a proton gradient. This Platanus occidentalis (Sycamore) protein is NAD(P)H-quinone oxidoreductase subunit I, chloroplastic.